Reading from the N-terminus, the 628-residue chain is Translation factor GUF1, mitochondrial (628 aa).

In terms of domain architecture, tr-type G spans 27–209; that stretch reads LPSRNFSIIA…AIISRIPPPS (183 aa). GTP contacts are provided by residues 36–43, 102–106, and 156–159; these read AHIDHGKS, DTPGH, and NKID.

It belongs to the TRAFAC class translation factor GTPase superfamily. Classic translation factor GTPase family. LepA subfamily.

The protein resides in the mitochondrion inner membrane. It catalyses the reaction GTP + H2O = GDP + phosphate + H(+). Its function is as follows. Promotes mitochondrial protein synthesis. May act as a fidelity factor of the translation reaction, by catalyzing a one-codon backward translocation of tRNAs on improperly translocated ribosomes. Binds to mitochondrial ribosomes in a GTP-dependent manner. The polypeptide is Translation factor GUF1, mitochondrial (Laccaria bicolor (strain S238N-H82 / ATCC MYA-4686) (Bicoloured deceiver)).